Here is a 238-residue protein sequence, read N- to C-terminus: Ribonuclease HII (238 aa).

In terms of domain architecture, RNase H type-2 spans 12–197 (GIVAGVDEAG…VLELLTDDLL (186 aa)). The a divalent metal cation site is built by D18, E19, and D107.

The protein belongs to the RNase HII family. Mn(2+) serves as cofactor. It depends on Mg(2+) as a cofactor.

The protein localises to the cytoplasm. The catalysed reaction is Endonucleolytic cleavage to 5'-phosphomonoester.. Endonuclease that specifically degrades the RNA of RNA-DNA hybrids. In Thermotoga petrophila (strain ATCC BAA-488 / DSM 13995 / JCM 10881 / RKU-1), this protein is Ribonuclease HII.